A 477-amino-acid polypeptide reads, in one-letter code: Aspartyl/glutamyl-tRNA(Asn/Gln) amidotransferase subunit B (477 aa).

Belongs to the GatB/GatE family. GatB subfamily. Heterotrimer of A, B and C subunits.

The catalysed reaction is L-glutamyl-tRNA(Gln) + L-glutamine + ATP + H2O = L-glutaminyl-tRNA(Gln) + L-glutamate + ADP + phosphate + H(+). It catalyses the reaction L-aspartyl-tRNA(Asn) + L-glutamine + ATP + H2O = L-asparaginyl-tRNA(Asn) + L-glutamate + ADP + phosphate + 2 H(+). In terms of biological role, allows the formation of correctly charged Asn-tRNA(Asn) or Gln-tRNA(Gln) through the transamidation of misacylated Asp-tRNA(Asn) or Glu-tRNA(Gln) in organisms which lack either or both of asparaginyl-tRNA or glutaminyl-tRNA synthetases. The reaction takes place in the presence of glutamine and ATP through an activated phospho-Asp-tRNA(Asn) or phospho-Glu-tRNA(Gln). The protein is Aspartyl/glutamyl-tRNA(Asn/Gln) amidotransferase subunit B of Ureaplasma urealyticum serovar 10 (strain ATCC 33699 / Western).